The chain runs to 319 residues: L-lactate dehydrogenase 2 (319 aa).

NAD(+)-binding positions include Val-16, Asp-37, Lys-42, Tyr-68, and Gly-82–Ala-83. Substrate-binding residues include Gln-85 and Arg-91. NAD(+) contacts are provided by residues Ser-104, Ala-121 to Asn-123, and Ser-146. Residue Asn-123–Asp-126 coordinates substrate. A substrate-binding site is contributed by Asp-151 to Arg-154. His-178 acts as the Proton acceptor in catalysis. Phosphotyrosine is present on Tyr-222. A substrate-binding site is contributed by Thr-231.

Belongs to the LDH/MDH superfamily. LDH family. As to quaternary structure, homotetramer.

The protein resides in the cytoplasm. The catalysed reaction is (S)-lactate + NAD(+) = pyruvate + NADH + H(+). It functions in the pathway fermentation; pyruvate fermentation to lactate; (S)-lactate from pyruvate: step 1/1. Its function is as follows. Catalyzes the conversion of lactate to pyruvate (Potential). Contributes to S.aureus growth during nitrosative stress in both aerobically and anaerobically cultured cells, despite playing a secondary role in this resistance mechanism. The chain is L-lactate dehydrogenase 2 from Staphylococcus aureus (strain USA300).